A 152-amino-acid chain; its full sequence is Putative RING finger protein 157L (152 aa).

Residues 111–146 (CVVCYENEICIKIQPCNHFVVCKSCFNRLNTCPMCR) form an RING-type zinc finger.

The protein belongs to the IIV-6 157L family.

This chain is Putative RING finger protein 157L, found in Invertebrate iridescent virus 6 (IIV-6).